The following is a 144-amino-acid chain: Androgenic gland hormone (144 aa).

An N-terminal signal peptide occupies residues Met-1–Ala-21. 4 cysteine pairs are disulfide-bonded: Cys-33–Cys-123, Cys-42–Cys-59, Cys-44–Cys-141, and Cys-124–Cys-132. Residues Ser-68–Gly-113 constitute a propeptide, c peptide. A glycan (N-linked (GlcNAc...) (complex) asparagine) is linked at Asn-133.

Androgenic gland.

The protein resides in the secreted. Its function is as follows. Controls sex differentiation and the formation of male appendages, spermatogenesis, pigmentation, and male specific behavior. This Armadillidium vulgare (Pillbug) protein is Androgenic gland hormone.